A 210-amino-acid chain; its full sequence is Riboflavin kinase (210 aa).

Over residues methionine 1 to threonine 11 the composition is skewed to pro residues. The tract at residues methionine 1–arginine 24 is disordered. Mg(2+) contacts are provided by threonine 44 and asparagine 46. The Nucleophile role is filled by glutamate 113.

Belongs to the flavokinase family. The cofactor is Zn(2+). Requires Mg(2+) as cofactor.

It catalyses the reaction riboflavin + ATP = FMN + ADP + H(+). It functions in the pathway cofactor biosynthesis; FMN biosynthesis; FMN from riboflavin (ATP route): step 1/1. In terms of biological role, catalyzes the phosphorylation of riboflavin (vitamin B2) to form flavin mononucleotide (FMN) coenzyme. This Emericella nidulans (strain FGSC A4 / ATCC 38163 / CBS 112.46 / NRRL 194 / M139) (Aspergillus nidulans) protein is Riboflavin kinase (fmn1).